The chain runs to 388 residues: S-adenosylmethionine synthase 1 (388 aa).

A Mg(2+)-binding site is contributed by glutamate 11. Residue histidine 17 coordinates ATP. Residue glutamate 45 coordinates K(+). Glutamate 58 and glutamine 101 together coordinate L-methionine. Residues aspartate 168–lysine 170, serine 233–phenylalanine 236, aspartate 244, arginine 250–lysine 251, alanine 267, lysine 271, and lysine 275 contribute to the ATP site. An L-methionine-binding site is contributed by aspartate 244. Lysine 275 is an L-methionine binding site.

This sequence belongs to the AdoMet synthase family. In terms of assembly, homotetramer. Requires Mn(2+) as cofactor. The cofactor is Mg(2+). Co(2+) is required as a cofactor. K(+) serves as cofactor. In terms of tissue distribution, mostly in Roots.

It is found in the cytoplasm. It catalyses the reaction L-methionine + ATP + H2O = S-adenosyl-L-methionine + phosphate + diphosphate. Its pathway is amino-acid biosynthesis; S-adenosyl-L-methionine biosynthesis; S-adenosyl-L-methionine from L-methionine: step 1/1. In terms of biological role, catalyzes the formation of S-adenosylmethionine from methionine and ATP. The reaction comprises two steps that are both catalyzed by the same enzyme: formation of S-adenosylmethionine (AdoMet) and triphosphate, and subsequent hydrolysis of the triphosphate. This chain is S-adenosylmethionine synthase 1 (SAMS1), found in Pinus contorta (Shore pine).